We begin with the raw amino-acid sequence, 706 residues long: K(+)-insensitive pyrophosphate-energized proton pump (706 aa).

5 consecutive transmembrane segments (helical) span residues Met1 to Ala21, Val62 to Ile82, Gly83 to Val103, Leu129 to Phe149, and Val164 to Phe184. Lys186 contributes to the substrate binding site. The Mg(2+) site is built by Asp189, Asp193, Asn216, and Asp219. 6 consecutive transmembrane segments (helical) span residues Leu231–Gly251, Thr263–Val283, Ile300–Phe320, Gly330–Ile350, Ile393–Ile413, and Ala414–Val434. Asp436 lines the Mg(2+) pocket. 4 helical membrane passes run Ala467 to Ala487, Tyr516 to Met536, Ile585 to Ile605, and Ala616 to Ile636. 3 residues coordinate Ca(2+): Asp646, Asp672, and Asp676. Lys679 is a binding site for substrate. Residues Ala685 to Ala705 traverse the membrane as a helical segment.

It belongs to the H(+)-translocating pyrophosphatase (TC 3.A.10) family. K(+)-insensitive subfamily. As to quaternary structure, homodimer. Mg(2+) serves as cofactor.

It is found in the cell inner membrane. It catalyses the reaction diphosphate + H2O + H(+)(in) = 2 phosphate + 2 H(+)(out). Functionally, proton pump that utilizes the energy of pyrophosphate hydrolysis as the driving force for proton movement across the membrane. Generates a proton motive force. This is K(+)-insensitive pyrophosphate-energized proton pump from Rhodopseudomonas palustris (strain ATCC BAA-98 / CGA009).